We begin with the raw amino-acid sequence, 212 residues long: Probable nicotinate-nucleotide adenylyltransferase (212 aa).

It belongs to the NadD family.

It catalyses the reaction nicotinate beta-D-ribonucleotide + ATP + H(+) = deamido-NAD(+) + diphosphate. It functions in the pathway cofactor biosynthesis; NAD(+) biosynthesis; deamido-NAD(+) from nicotinate D-ribonucleotide: step 1/1. Catalyzes the reversible adenylation of nicotinate mononucleotide (NaMN) to nicotinic acid adenine dinucleotide (NaAD). This chain is Probable nicotinate-nucleotide adenylyltransferase, found in Shewanella sp. (strain MR-4).